Consider the following 685-residue polypeptide: Polyphosphate kinase (685 aa).

Residue asparagine 45 coordinates ATP. Mg(2+) contacts are provided by arginine 375 and arginine 405. Histidine 435 (phosphohistidine intermediate) is an active-site residue. ATP contacts are provided by tyrosine 468, arginine 564, and histidine 592.

This sequence belongs to the polyphosphate kinase 1 (PPK1) family. The cofactor is Mg(2+). Post-translationally, an intermediate of this reaction is the autophosphorylated ppk in which a phosphate is covalently linked to a histidine residue through a N-P bond.

The catalysed reaction is [phosphate](n) + ATP = [phosphate](n+1) + ADP. In terms of biological role, catalyzes the reversible transfer of the terminal phosphate of ATP to form a long-chain polyphosphate (polyP). The sequence is that of Polyphosphate kinase from Neisseria meningitidis serogroup C (strain 053442).